Reading from the N-terminus, the 312-residue chain is tRNA-dihydrouridine(16) synthase (312 aa).

FMN is bound by residues 7 to 9 (PME) and Q68. The active-site Proton donor is C98. Residues K139, 200-202 (NGE), and 224-225 (GR) contribute to the FMN site.

This sequence belongs to the Dus family. DusC subfamily. Requires FMN as cofactor.

The enzyme catalyses 5,6-dihydrouridine(16) in tRNA + NADP(+) = uridine(16) in tRNA + NADPH + H(+). It catalyses the reaction 5,6-dihydrouridine(16) in tRNA + NAD(+) = uridine(16) in tRNA + NADH + H(+). Catalyzes the synthesis of 5,6-dihydrouridine (D), a modified base found in the D-loop of most tRNAs, via the reduction of the C5-C6 double bond in target uridines. Specifically modifies U16 in tRNAs. In Yersinia pestis, this protein is tRNA-dihydrouridine(16) synthase.